The sequence spans 253 residues: tRNA (guanine-N(1)-)-methyltransferase (253 aa).

Residues Gly-111 and 131 to 136 (LGDFVL) contribute to the S-adenosyl-L-methionine site.

It belongs to the RNA methyltransferase TrmD family. In terms of assembly, homodimer.

It is found in the cytoplasm. The catalysed reaction is guanosine(37) in tRNA + S-adenosyl-L-methionine = N(1)-methylguanosine(37) in tRNA + S-adenosyl-L-homocysteine + H(+). Functionally, specifically methylates guanosine-37 in various tRNAs. This Synechococcus sp. (strain JA-3-3Ab) (Cyanobacteria bacterium Yellowstone A-Prime) protein is tRNA (guanine-N(1)-)-methyltransferase.